The primary structure comprises 176 residues: MTVDALSNADNQDLRDNFIANRFLSHEAKLLDQRRFTEWLDLLDDEIRYIVPLRLMALDFDREVRADSFHINDGKVNLKVRAKRSSVSSGWGETPPSRTLRLVGSVMTDRIDQEGVLEVESAVIIYRQRAAIGQGDVLAFRRTDWLRIDGGTVKLLKRVALLTDASLATPNLAIFL.

Belongs to the bacterial ring-hydroxylating dioxygenase beta subunit family. PdmA (subunit alpha) and PdmB (subunit beta) form the oxygenase component of a bacterial Rieske non-heme iron oxygenase (RO) system.

The catalysed reaction is a 1,1-dimethyl-3-phenylurea + 2 reduced [2Fe-2S]-[ferredoxin] + O2 + 2 H(+) = a 1-methyl-3-phenylurea + formaldehyde + 2 oxidized [2Fe-2S]-[ferredoxin] + H2O. It catalyses the reaction isoproturon + 2 reduced [2Fe-2S]-[ferredoxin] + O2 + 2 H(+) = 1-methyl-3-[4-(propan-2-yl)phenyl]urea + formaldehyde + 2 oxidized [2Fe-2S]-[ferredoxin] + H2O. The enzyme catalyses chlorotoluron + 2 reduced [2Fe-2S]-[ferredoxin] + O2 + 2 H(+) = 3-(3-chloro-4-methylphenyl)-1-methylurea + formaldehyde + 2 oxidized [2Fe-2S]-[ferredoxin] + H2O. It carries out the reaction metoxuron + 2 reduced [2Fe-2S]-[ferredoxin] + O2 + 2 H(+) = 3-(3-chloro-4-methoxylphenyl)-1-methylurea + formaldehyde + 2 oxidized [2Fe-2S]-[ferredoxin] + H2O. The catalysed reaction is monuron + 2 reduced [2Fe-2S]-[ferredoxin] + O2 + 2 H(+) = 3-(4-chlorophenyl)-1-methylurea + formaldehyde + 2 oxidized [2Fe-2S]-[ferredoxin] + H2O. It catalyses the reaction diuron + 2 reduced [2Fe-2S]-[ferredoxin] + O2 + 2 H(+) = 3-(3,4-dichlorophenyl)-1-methylurea + formaldehyde + 2 oxidized [2Fe-2S]-[ferredoxin] + H2O. The enzyme catalyses fluometuron + 2 reduced [2Fe-2S]-[ferredoxin] + O2 + 2 H(+) = 3-[3-(trifluoromethyl)phenyl]-1-methylurea + formaldehyde + 2 oxidized [2Fe-2S]-[ferredoxin] + H2O. It carries out the reaction fenuron + 2 reduced [2Fe-2S]-[ferredoxin] + O2 + 2 H(+) = 1-methyl-3-phenylurea + formaldehyde + 2 oxidized [2Fe-2S]-[ferredoxin] + H2O. It participates in xenobiotic degradation. Activity is stimulated in vitro by coexpression of a [3Fe-4S]-type ferredoxin. Functionally, part of the multicomponent N,N-dimethyl phenylurea N-demethylase responsible for the initial N-demethylation step during the bacterial metabolism of N,N-dimethyl-substituted phenylurea herbicides. Catalyzes the mono-N-demethylation of N,N-dimethyl-substituted phenylurea herbicides to their mono-N-demethylated derivatives. Is active on isoproturon (IPU), chlorotoluron, metoxuron, monoron, diuron, fluometuron and fenuron, but cannot transform the N-methoxy-N-methyl-substituted herbicides. This is N,N-dimethyl phenylurea N-demethylase subunit beta from Sphingobium sp. (strain YBL2).